Here is an 88-residue protein sequence, read N- to C-terminus: Small ribosomal subunit protein uS15c (88 aa).

It belongs to the universal ribosomal protein uS15 family. In terms of assembly, part of the 30S ribosomal subunit.

The protein resides in the plastid. It localises to the chloroplast. The chain is Small ribosomal subunit protein uS15c (rps15) from Draba nemorosa (Woodland whitlowgrass).